The primary structure comprises 82 residues: Small ribosomal subunit protein bS18 (82 aa).

The disordered stretch occupies residues 1–25 (MTEMNQTAIRRPFHRRRKTCPFSGT).

Belongs to the bacterial ribosomal protein bS18 family. As to quaternary structure, part of the 30S ribosomal subunit. Forms a tight heterodimer with protein bS6.

Functionally, binds as a heterodimer with protein bS6 to the central domain of the 16S rRNA, where it helps stabilize the platform of the 30S subunit. In Bartonella henselae (strain ATCC 49882 / DSM 28221 / CCUG 30454 / Houston 1) (Rochalimaea henselae), this protein is Small ribosomal subunit protein bS18.